The sequence spans 231 residues: Enolase-phosphatase E1 (231 aa).

The protein belongs to the HAD-like hydrolase superfamily. MasA/MtnC family. Monomer. Mg(2+) serves as cofactor.

The enzyme catalyses 5-methylsulfanyl-2,3-dioxopentyl phosphate + H2O = 1,2-dihydroxy-5-(methylsulfanyl)pent-1-en-3-one + phosphate. The protein operates within amino-acid biosynthesis; L-methionine biosynthesis via salvage pathway; L-methionine from S-methyl-5-thio-alpha-D-ribose 1-phosphate: step 3/6. It functions in the pathway amino-acid biosynthesis; L-methionine biosynthesis via salvage pathway; L-methionine from S-methyl-5-thio-alpha-D-ribose 1-phosphate: step 4/6. Functionally, bifunctional enzyme that catalyzes the enolization of 2,3-diketo-5-methylthiopentyl-1-phosphate (DK-MTP-1-P) into the intermediate 2-hydroxy-3-keto-5-methylthiopentenyl-1-phosphate (HK-MTPenyl-1-P), which is then dephosphorylated to form the acireductone 1,2-dihydroxy-3-keto-5-methylthiopentene (DHK-MTPene). In Stenotrophomonas maltophilia (strain R551-3), this protein is Enolase-phosphatase E1.